The following is a 321-amino-acid chain: GDP-L-fucose synthase (321 aa).

14–20 contacts NADP(+); sequence GGSGLVG. The active-site Proton donor/acceptor is the tyrosine 143. NADP(+) contacts are provided by residues lysine 147, 170–173, and histidine 186; that span reads PTNV. 4 residues coordinate substrate: lysine 194, tryptophan 208, arginine 215, and aspartate 277.

It belongs to the NAD(P)-dependent epimerase/dehydratase family. Fucose synthase subfamily. Homodimer.

The enzyme catalyses GDP-beta-L-fucose + NADP(+) = GDP-4-dehydro-alpha-D-rhamnose + NADPH + H(+). The protein operates within nucleotide-sugar biosynthesis; GDP-L-fucose biosynthesis via de novo pathway; GDP-L-fucose from GDP-alpha-D-mannose: step 2/2. Its function is as follows. Catalyzes the two-step NADP-dependent conversion of GDP-4-dehydro-6-deoxy-D-mannose to GDP-fucose, involving an epimerase and a reductase reaction. This Mus musculus (Mouse) protein is GDP-L-fucose synthase.